The chain runs to 198 residues: Nucleoid occlusion factor SlmA (198 aa).

In terms of domain architecture, HTH tetR-type spans N10–L70. The H-T-H motif DNA-binding region spans T33–F52. Residues E117–R144 adopt a coiled-coil conformation.

Belongs to the nucleoid occlusion factor SlmA family. As to quaternary structure, homodimer. Interacts with FtsZ.

It is found in the cytoplasm. The protein resides in the nucleoid. Required for nucleoid occlusion (NO) phenomenon, which prevents Z-ring formation and cell division over the nucleoid. Acts as a DNA-associated cell division inhibitor that binds simultaneously chromosomal DNA and FtsZ, and disrupts the assembly of FtsZ polymers. SlmA-DNA-binding sequences (SBS) are dispersed on non-Ter regions of the chromosome, preventing FtsZ polymerization at these regions. This Salmonella paratyphi A (strain ATCC 9150 / SARB42) protein is Nucleoid occlusion factor SlmA.